The primary structure comprises 667 residues: Protein MAIN-LIKE 2 (667 aa).

Methionine 1 is modified (N-acetylmethionine). Over residues 492–508 (MRGKERVRRKGMGKRRK) the composition is skewed to basic residues. 2 disordered regions span residues 492–523 (MRGKERVRRKGMGKRRKGIDPMEDYGGSEDES) and 594–667 (KLQE…TVVA). Positions 512–523 (PMEDYGGSEDES) are enriched in acidic residues. Basic and acidic residues-rich tracts occupy residues 608 to 618 (YDVKKEDKESK) and 656 to 667 (SLDRRGENTVVA).

Expressed in root tips, the shoot apical meristem (SAM), leaves, mature flowers and embryos.

Its subcellular location is the nucleus. Functionally, maybe required to maintain cell division activity in meristematic cells. The chain is Protein MAIN-LIKE 2 from Arabidopsis thaliana (Mouse-ear cress).